Consider the following 355-residue polypeptide: Erythronate-4-phosphate dehydrogenase (355 aa).

2 residues coordinate substrate: Ser-45 and Thr-66. Asp-146 provides a ligand contact to NAD(+). Residue Arg-206 is part of the active site. An NAD(+)-binding site is contributed by Asp-229. Glu-234 is an active-site residue. Catalysis depends on His-251, which acts as the Proton donor. Gly-254 contacts NAD(+). Substrate is bound at residue Tyr-255.

It belongs to the D-isomer specific 2-hydroxyacid dehydrogenase family. PdxB subfamily. In terms of assembly, homodimer.

It is found in the cytoplasm. The enzyme catalyses 4-phospho-D-erythronate + NAD(+) = (R)-3-hydroxy-2-oxo-4-phosphooxybutanoate + NADH + H(+). The protein operates within cofactor biosynthesis; pyridoxine 5'-phosphate biosynthesis; pyridoxine 5'-phosphate from D-erythrose 4-phosphate: step 2/5. In terms of biological role, catalyzes the oxidation of erythronate-4-phosphate to 3-hydroxy-2-oxo-4-phosphonooxybutanoate. The sequence is that of Erythronate-4-phosphate dehydrogenase from Acinetobacter baumannii (strain AB307-0294).